A 544-amino-acid chain; its full sequence is MRVAVAGCCHGELDKIYETLALAERRGPGPVDLLLCCGDFQAVRNEADLRCMAVPPKYRHMQTFYRYYSGEKKAPVLTLFIGGNHEASNHLQELPYGGWVAPNIYYLGLAGVVKYRGVRIGGISGIFKSHDYRKGHFECPPYNSSTIRSIYHVRNIEVYKLKQLKQPIDIFLSHDWPRSIYHYGNKKQLLKTKSFFRQEVENNTLGSPAASELLEHLKPTYWFSAHLHVKFAALMQHQAKDKGQTARATKFLALDKCLPHRDFLQILEIEHDPSAPDYLEYDIEWLTILRATDDLINVTGRLWNMPENNGLHARWDYSATEEGMKEVLEKLNHDLKVPCNFSVTAACYDPSKPQTQMQLIHRINPQTTEFCAQLGIIDINVRLQKSKEEHHVCGEYEEQDDVESNDSGEDQSEYNTDTSALSSINPDEIMLDEEEDEDSIVSAHSGMNTPSVEPSDQASEFSASFSDVRILPGSMIVSSDDTVDSTIDREGKPGGTVESGNGEDLTKVPLKRLSDEHEPEQRKKIKRRNQAIYAAVDDDDDDAA.

Residues C8, H10, D39, and N84 each contribute to the a divalent metal cation site. A lariat recognition loop region spans residues 124–154; the sequence is SGIFKSHDYRKGHFECPPYNSSTIRSIYHVR. K128 is subject to N6-acetyllysine. A divalent metal cation-binding residues include H174, H226, and H228. A compositionally biased stretch (acidic residues) spans 395–412; the sequence is EYEEQDDVESNDSGEDQS. The tract at residues 395 to 463 is disordered; it reads EYEEQDDVES…PSDQASEFSA (69 aa). Residues 413 to 425 show a composition bias toward polar residues; it reads EYNTDTSALSSIN. Over residues 429–439 the composition is skewed to acidic residues; sequence IMLDEEEDEDS. Positions 445-463 are enriched in polar residues; the sequence is SGMNTPSVEPSDQASEFSA. S464, S474, S478, S479, S485, S499, and S514 each carry phosphoserine. The disordered stretch occupies residues 476–544; it reads IVSSDDTVDS…AVDDDDDDAA (69 aa). Residues 512-522 are compositionally biased toward basic and acidic residues; the sequence is RLSDEHEPEQR.

This sequence belongs to the lariat debranching enzyme family. The cofactor is Fe(2+). Zn(2+) is required as a cofactor. It depends on Mn(2+) as a cofactor. In terms of tissue distribution, ubiquitously expressed, strongest expression in the spinal cord and brainstem.

It is found in the nucleus. Active in presence of diverse metals including Fe(2+), Zn(2+), Mn(2+). Also activated by Ca(2+). Binds two metal cations in two adjacent alpha and beta metal-binding pockets. Cleaves the 2'-5' phosphodiester linkage at the branch point of excised lariat intron RNA and converts them into linear molecules that can be subsequently degraded, thereby facilitating ribonucleotide turnover. Linked to its role in pre-mRNA processing mechanism, may also participate in retrovirus replication via an RNA lariat intermediate in cDNA synthesis and have an antiviral cell-intrinsic defense function in the brainstem. The sequence is that of Lariat debranching enzyme (DBR1) from Homo sapiens (Human).